A 72-amino-acid polypeptide reads, in one-letter code: 3-deoxy-manno-octulosonate cytidylyltransferase (72 aa).

This sequence belongs to the KdsB family. Homodimer.

It localises to the cytoplasm. It catalyses the reaction 3-deoxy-alpha-D-manno-oct-2-ulosonate + CTP = CMP-3-deoxy-beta-D-manno-octulosonate + diphosphate. Its pathway is nucleotide-sugar biosynthesis; CMP-3-deoxy-D-manno-octulosonate biosynthesis; CMP-3-deoxy-D-manno-octulosonate from 3-deoxy-D-manno-octulosonate and CTP: step 1/1. It functions in the pathway bacterial outer membrane biogenesis; lipopolysaccharide biosynthesis. Activates KDO (a required 8-carbon sugar) for incorporation into bacterial lipopolysaccharide in Gram-negative bacteria. This is 3-deoxy-manno-octulosonate cytidylyltransferase (kpsU) from Escherichia coli.